The following is a 295-amino-acid chain: Ethanolamine ammonia-lyase small subunit (295 aa).

The adenosylcob(III)alamin site is built by valine 207, glutamate 228, and cysteine 258.

Belongs to the EutC family. The basic unit is a heterodimer which dimerizes to form tetramers. The heterotetramers trimerize; 6 large subunits form a core ring with 6 small subunits projecting outwards. Requires adenosylcob(III)alamin as cofactor.

The protein resides in the bacterial microcompartment. It catalyses the reaction ethanolamine = acetaldehyde + NH4(+). Its pathway is amine and polyamine degradation; ethanolamine degradation. Functionally, catalyzes the deamination of various vicinal amino-alcohols to oxo compounds. Allows this organism to utilize ethanolamine as the sole source of nitrogen and carbon in the presence of external vitamin B12. In Shigella sonnei (strain Ss046), this protein is Ethanolamine ammonia-lyase small subunit.